Consider the following 611-residue polypeptide: Dihydroxy-acid dehydratase (611 aa).

D81 is a binding site for Mg(2+). C122 contacts [2Fe-2S] cluster. 2 residues coordinate Mg(2+): D123 and K124. The residue at position 124 (K124) is an N6-carboxylysine. C195 is a binding site for [2Fe-2S] cluster. A Mg(2+)-binding site is contributed by E491. S517 (proton acceptor) is an active-site residue.

It belongs to the IlvD/Edd family. Homodimer. [2Fe-2S] cluster is required as a cofactor. Requires Mg(2+) as cofactor.

It carries out the reaction (2R)-2,3-dihydroxy-3-methylbutanoate = 3-methyl-2-oxobutanoate + H2O. The catalysed reaction is (2R,3R)-2,3-dihydroxy-3-methylpentanoate = (S)-3-methyl-2-oxopentanoate + H2O. The protein operates within amino-acid biosynthesis; L-isoleucine biosynthesis; L-isoleucine from 2-oxobutanoate: step 3/4. Its pathway is amino-acid biosynthesis; L-valine biosynthesis; L-valine from pyruvate: step 3/4. Its function is as follows. Functions in the biosynthesis of branched-chain amino acids. Catalyzes the dehydration of (2R,3R)-2,3-dihydroxy-3-methylpentanoate (2,3-dihydroxy-3-methylvalerate) into 2-oxo-3-methylpentanoate (2-oxo-3-methylvalerate) and of (2R)-2,3-dihydroxy-3-methylbutanoate (2,3-dihydroxyisovalerate) into 2-oxo-3-methylbutanoate (2-oxoisovalerate), the penultimate precursor to L-isoleucine and L-valine, respectively. The chain is Dihydroxy-acid dehydratase from Actinobacillus pleuropneumoniae serotype 5b (strain L20).